Here is a 172-residue protein sequence, read N- to C-terminus: Small ribosomal subunit protein uS5 (172 aa).

The region spanning 17–80 (LREKMIAINR…EEARRNLAKI (64 aa)) is the S5 DRBM domain.

It belongs to the universal ribosomal protein uS5 family. As to quaternary structure, part of the 30S ribosomal subunit. Contacts proteins S4 and S8.

Its function is as follows. With S4 and S12 plays an important role in translational accuracy. Located at the back of the 30S subunit body where it stabilizes the conformation of the head with respect to the body. In Variovorax paradoxus (strain S110), this protein is Small ribosomal subunit protein uS5.